Consider the following 366-residue polypeptide: Cyclic amide hydrolase (366 aa).

Positions 1–103 are RU A; the sequence is MKVGVHKLAM…TLFTRAPDDG (103 aa). Substrate is bound by residues Arg51 and 82–83; that span reads SG. An RU B region spans residues 110 to 247; sequence RLALGIGITR…CEVLLFGNAP (138 aa). Residue Lys160 is part of the active site. Substrate-binding positions include Arg192, 230–231, Arg327, and 346–347; these read SA and SG. The active-site Nucleophile is the Ser230. Residues 253–366 form an RU C region; the sequence is FRIGHGVLKD…AAPIAAIVRA (114 aa).

It belongs to the cyclic amide hydrolase (CyAH) family. Homotetramer.

Its function is as follows. Cyclic amide hydrolase of unknown substrate specificity. Catalyzes the hydrolytic ring-opening of a cyclic amide. Does not act on cyanuric acid nor barbituric acid. This Azorhizobium caulinodans (strain ATCC 43989 / DSM 5975 / JCM 20966 / LMG 6465 / NBRC 14845 / NCIMB 13405 / ORS 571) protein is Cyclic amide hydrolase.